The chain runs to 354 residues: Glutaminyl-peptide cyclotransferase (354 aa).

The transit peptide at 1 to 8 (MRLLLRNY) directs the protein to the mitochondrion. The cysteines at positions 136 and 158 are disulfide-linked. A Zn(2+)-binding site is contributed by Asp-153. Glu-190 serves as the catalytic Proton acceptor. A Zn(2+)-binding site is contributed by Glu-191. Asp-228 (proton acceptor) is an active-site residue. A Zn(2+)-binding site is contributed by His-318.

It belongs to the glutaminyl-peptide cyclotransferase family.

Its subcellular location is the secreted. It is found in the mitochondrion. It catalyses the reaction N-terminal L-glutaminyl-[peptide] = N-terminal 5-oxo-L-prolyl-[peptide] + NH4(+). Inhibited by imidazoles (imidazole, benzimidazole, 1-benzylimidazole, 1-methylimidazole, P150/03 and N-omega-acetylhistamine) and cysteamines (cysteamine and N-dimethylcysteamine). Inhibited by PDB50 1(3,4-dimethoxyphenyl)-3-(3-imidazol-1-ylpropyl)thiourea. Acts as a glutaminyl-peptide cyclotransferase. Responsible for the biosynthesis of pyroglutamyl peptides. Might be more efficient in the conversion of tri and tetrapeptides in vitro. Might have a relative preference for substrates containing hydrophobic amino acids in vitro. The protein is Glutaminyl-peptide cyclotransferase of Drosophila melanogaster (Fruit fly).